Here is a 471-residue protein sequence, read N- to C-terminus: Adenosylhomocysteinase (471 aa).

Substrate contacts are provided by T60, D135, and E196. NAD(+) is bound at residue 197 to 199; it reads TTT. Positions 226 and 230 each coordinate substrate. Residues N231, 260–265, E283, N318, 339–341, and N387 each bind NAD(+); these read GYGDVG and IGH.

This sequence belongs to the adenosylhomocysteinase family. NAD(+) serves as cofactor.

The protein localises to the cytoplasm. The enzyme catalyses S-adenosyl-L-homocysteine + H2O = L-homocysteine + adenosine. Its pathway is amino-acid biosynthesis; L-homocysteine biosynthesis; L-homocysteine from S-adenosyl-L-homocysteine: step 1/1. May play a key role in the regulation of the intracellular concentration of adenosylhomocysteine. The polypeptide is Adenosylhomocysteinase (Chlorobaculum tepidum (strain ATCC 49652 / DSM 12025 / NBRC 103806 / TLS) (Chlorobium tepidum)).